A 206-amino-acid polypeptide reads, in one-letter code: Sperm acrosome developmental regulator (206 aa).

The tract at residues 180 to 206 (RRHHVRCHAAPRPNPAQSLKLDAQSPL) is disordered.

In terms of tissue distribution, expressed in sperm (at protein level).

It localises to the cytoplasmic vesicle. The protein resides in the secretory vesicle. It is found in the acrosome. In terms of biological role, may play a role in acrosome formation and nucleus shaping during spermiogenesis. In Homo sapiens (Human), this protein is Sperm acrosome developmental regulator.